A 1162-amino-acid polypeptide reads, in one-letter code: Glycerophosphocholine phosphodiesterase GDE1 (1162 aa).

The SPX domain maps to 1 to 155 (MKFGKTYVTH…TSILSQHSGV (155 aa)). ANK repeat units lie at residues 346–375 (YHRT…KWGL), 392–421 (EGLT…AQTL), 423–452 (CPNL…DVNY), 458–487 (RNET…NTEI), 492–521 (FGWT…SYDI), and 525–554 (SGWL…KLLL). The GP-PDE domain occupies 817–1146 (TRVIGHRGLG…DSVLAVREGL (330 aa)).

It belongs to the GDE1 family.

Its subcellular location is the cytoplasm. It catalyses the reaction sn-glycerol 3-phosphocholine + H2O = sn-glycerol 3-phosphate + choline + H(+). Glycerophosphocholine glycerophosphodiesterase responsible for the hydrolysis of intracellular glycerophosphocholine into glycerol-phosphate and choline. The choline is used for phosphatidyl-choline synthesis. Required for utilization of glycerophosphocholine as phosphate source. C.albicans can utilize GroPCho through transport and intracellular hydrolysis or through extracellular hydrolysis. The sequence is that of Glycerophosphocholine phosphodiesterase GDE1 from Candida albicans (strain SC5314 / ATCC MYA-2876) (Yeast).